A 133-amino-acid polypeptide reads, in one-letter code: Covalently-linked cell wall protein 12 (133 aa).

The first 18 residues, 1-18 (MQFSTVASIAAVAAVASA), serve as a signal peptide directing secretion. A glycan (N-linked (GlcNAc...) asparagine) is linked at Asn-21. 3 O-linked (Man) threonine glycosylation sites follow: Thr-23, Thr-24, and Thr-26. O-linked (Man) serine glycosylation is found at Ser-28 and Ser-31. O-linked (Man) threonine glycans are attached at residues Thr-32, Thr-33, Thr-36, and Thr-38. Ser-39 and Ser-46 each carry an O-linked (Man) serine glycan. Residue Thr-48 is glycosylated (O-linked (Man) threonine). A run of 2 repeats spans residues 75–88 (TTEA…TAAP) and 91–103 (STEA…SAAP). The interval 79-104 (PKNGTSTAAPVTSTEAPKNTTSAAPT) is disordered. Residue Lys-80 forms a Glycyl lysine isopeptide (Lys-Gly) (interchain with G-Cter in ubiquitin) linkage. Residues Asn-81 and Asn-97 are each glycosylated (N-linked (GlcNAc...) asparagine). Residues 81 to 104 (NGTSTAAPVTSTEAPKNTTSAAPT) are compositionally biased toward polar residues. Residue Gly-112 is the site of GPI-anchor amidated glycine attachment. Positions 113–133 (AAAKALPAAGALLAGAAALLL) are cleaved as a propeptide — removed in mature form.

It to yeast protein YDR134C. Extensively O-glycosylated; glycans consist probably of single mannose residues. N-glycosylated. Post-translationally, the GPI-anchor is attached to the protein in the endoplasmic reticulum and serves to target the protein to the cell surface. There, the glucosamine-inositol phospholipid moiety is cleaved off and the GPI-modified mannoprotein is covalently attached via its lipidless GPI glycan remnant to the 1,6-beta-glucan of the outer cell wall layer.

Its subcellular location is the secreted. The protein resides in the cell wall. It is found in the membrane. Functionally, component of the cell wall. May play a role in the formation of a tightly packed outer mannan layer, which protects the inner glucan. This is Covalently-linked cell wall protein 12 (CCW12) from Saccharomyces cerevisiae (strain ATCC 204508 / S288c) (Baker's yeast).